The following is a 267-amino-acid chain: Small ribosomal subunit protein uS2 (267 aa).

A disordered region spans residues 234–267 (DNAEEELAEAISQEEPSAAEELPDDMADNENEFE). Residues 250-267 (SAAEELPDDMADNENEFE) show a composition bias toward acidic residues.

The protein belongs to the universal ribosomal protein uS2 family.

The sequence is that of Small ribosomal subunit protein uS2 from Dichelobacter nodosus (strain VCS1703A).